The following is a 1052-amino-acid chain: MLEKIIRFSLKHRWFVLLFTLVIAILGVYNFQRLPIDAVPDITNVQVQINTQASGYSPFEVEQRITFPIELAMSGLPSLDYTRSLSRYGLSQVTVVFKDGTNIYFARQLINERLQEVKDKLPPGVETTLGPISTGLGEIFMYTVTNKPNVPISQHYNPTELRTIQDWIIKPQLRNVEGVAEVNTIGGYEKQFHITPDPSKLVRYRLSLNDVVEALERNNANVGAGYIETNGEQNLIRVPGQVQNMADIENIVIASFEGTPVRIRDVAEVALGKELRTGAATENSKEVVLGTVFILMGENSRTVSERVAAKMKDINKTLPEGVEAITVYNRTTLVNATINTVKNNLLEGALLVCVILFLFLGNIRAALITAMVIPLSMLLTITGMVENQISANLMSLGALDFGLIVDGAVIIVENCIKHLAEQQHALHRVLNLEERLKVISYATTEVIRPSIFGVFIITVVYLPILTLTGVEGKMFLPMAQTVIIALLASMLFALTFVPAAVAIFLRGHLQEKENWLVHYLSLGYAKVLRRCFHARRVVISAAVALVVVSLGIAFHLGGEFIPSLDEGDIAMHAMRIPGTSLTQAITMQDLVEKRIRQFSEVKNVFAKLGTAEVATDPMPPNVADTFIILKSRKKWTNPKKTKPGLVQEIESAVQQIPGNNYEFTQPIQMRFNELISGVRSDVAVKVFGDDMDTLLKTAEAISAQLKQVPGAADVKVEQVSGLPLLTVEINRDVLARYGLQIGTVQEAVVIATGGKKGGELFEGDKRFDIVVRLPESLRSDPNVLRQIFIPLPLSKDGEQHFIPLSEVASLIRSESPNQISRENGKRRVVVTANVRNRDLSSFVSEAKKRIDGQVKLPSGYWITWGGQFEQLQSAYQRLQIVVPITLLGIFLLLFISFGKVRDALLVFTGIPLALTGGVFALWLRGIPLSISAGVGFIALSGVAVLNGLVMITFINKLREQKKVYLKDAVLQGSLARLRPVLMTALVASLGFVPMALATGTGSEVQRPLATVVIGGIISSTFLTLLVLPGLYYVFHGRRKKGQSKSEPQEQIM.

A run of 13 helical transmembrane segments spans residues 14–34, 121–141, 348–368, 369–389, 393–413, 450–470, 483–503, 537–557, 878–898, 903–923, 934–954, 979–999, and 1011–1031; these read WFVL…FQRL, LPPG…EIFM, GALL…AALI, TAMV…ENQI, LMSL…IIVE, SIFG…LTGV, IIAL…AVAI, VVIS…FHLG, LQIV…ISFG, ALLV…ALWL, VGFI…ITFI, PVLM…LATG, and VVIG…PGLY.

Belongs to the resistance-nodulation-cell division (RND) (TC 2.A.6) family.

It localises to the cell inner membrane. Its function is as follows. Presumed to function with HelC and HelB in efflux of an unidentified substrate. The chain is Protein HelA (helA) from Legionella pneumophila.